The chain runs to 431 residues: Glutamate-1-semialdehyde 2,1-aminomutase (431 aa).

Lysine 269 bears the N6-(pyridoxal phosphate)lysine mark.

Belongs to the class-III pyridoxal-phosphate-dependent aminotransferase family. HemL subfamily. Homodimer. The cofactor is pyridoxal 5'-phosphate.

It is found in the cytoplasm. The enzyme catalyses (S)-4-amino-5-oxopentanoate = 5-aminolevulinate. It functions in the pathway porphyrin-containing compound metabolism; protoporphyrin-IX biosynthesis; 5-aminolevulinate from L-glutamyl-tRNA(Glu): step 2/2. The polypeptide is Glutamate-1-semialdehyde 2,1-aminomutase (Francisella tularensis subsp. tularensis (strain SCHU S4 / Schu 4)).